We begin with the raw amino-acid sequence, 357 residues long: Protein Wnt-8c (357 aa).

Positions 1–16 (MRGSTFLLLSIVGIYG) are cleaved as a signal peptide. The cysteines at positions 55 and 66 are disulfide-linked. Asparagine 104 is a glycosylation site (N-linked (GlcNAc...) asparagine). 9 disulfide bridges follow: cysteine 105–cysteine 113, cysteine 115–cysteine 133, cysteine 181–cysteine 195, cysteine 183–cysteine 190, cysteine 260–cysteine 298, cysteine 276–cysteine 291, cysteine 313–cysteine 328, cysteine 315–cysteine 325, and cysteine 320–cysteine 321. Serine 187 carries the O-palmitoleoyl serine lipid modification. N-linked (GlcNAc...) asparagine glycosylation is found at asparagine 263 and asparagine 282. Residue asparagine 346 is glycosylated (N-linked (GlcNAc...) asparagine).

It belongs to the Wnt family. In terms of processing, palmitoleoylation is required for efficient binding to frizzled receptors. Depalmitoleoylation leads to Wnt signaling pathway inhibition. Proteolytic processing by tiki1 and tiki2 promotes oxidation and formation of large disulfide-bond oligomers, leading to inactivation of wnt8c. In terms of tissue distribution, cells that form rhombomere 4. Hensen node and the neural plate immediately anterior to it.

It is found in the secreted. It localises to the extracellular space. The protein localises to the extracellular matrix. Functionally, ligand for members of the frizzled family of seven transmembrane receptors. Probable developmental protein. Is likely to signal over only few cell diameters. May be involved in the regulation of axis formation and in the rhombomere specification. This is Protein Wnt-8c (WNT8C) from Gallus gallus (Chicken).